A 176-amino-acid polypeptide reads, in one-letter code: Peptide deformylase (176 aa).

Residues cysteine 95 and histidine 137 each coordinate Fe cation. The active site involves glutamate 138. Position 141 (histidine 141) interacts with Fe cation.

Belongs to the polypeptide deformylase family. Requires Fe(2+) as cofactor.

The catalysed reaction is N-terminal N-formyl-L-methionyl-[peptide] + H2O = N-terminal L-methionyl-[peptide] + formate. Functionally, removes the formyl group from the N-terminal Met of newly synthesized proteins. Requires at least a dipeptide for an efficient rate of reaction. N-terminal L-methionine is a prerequisite for activity but the enzyme has broad specificity at other positions. The protein is Peptide deformylase of Hyphomonas neptunium (strain ATCC 15444).